A 62-amino-acid chain; its full sequence is Chromatin protein Cren7 (62 aa).

This sequence belongs to the Cren7 family. As to quaternary structure, monomer. In terms of processing, methylated at multiple sites, to varying extents.

The protein resides in the chromosome. It is found in the cytoplasm. In terms of biological role, a chromatin protein, binds double-stranded DNA without sequence specificity. Constrains negative DNA supercoils. The polypeptide is Chromatin protein Cren7 (Staphylothermus marinus (strain ATCC 43588 / DSM 3639 / JCM 9404 / F1)).